Consider the following 400-residue polypeptide: CinA-like protein (400 aa).

Belongs to the CinA family.

This is CinA-like protein from Escherichia coli (strain K12 / MC4100 / BW2952).